A 394-amino-acid chain; its full sequence is Elongation factor Tu 2 (394 aa).

In terms of domain architecture, tr-type G spans 10–204 (KPHVNVGTIG…ALDTYIPEPA (195 aa)). The interval 19-26 (GHVDHGKT) is G1. 19-26 (GHVDHGKT) contacts GTP. Residue threonine 26 participates in Mg(2+) binding. Residues 60–64 (GITIN) form a G2 region. Residues 81-84 (DCPG) are G3. Residues 81–85 (DCPGH) and 136–139 (NKCD) contribute to the GTP site. Residues 136-139 (NKCD) form a G4 region. The segment at 174 to 176 (SAL) is G5.

This sequence belongs to the TRAFAC class translation factor GTPase superfamily. Classic translation factor GTPase family. EF-Tu/EF-1A subfamily. In terms of assembly, monomer.

The protein localises to the cytoplasm. The enzyme catalyses GTP + H2O = GDP + phosphate + H(+). Functionally, GTP hydrolase that promotes the GTP-dependent binding of aminoacyl-tRNA to the A-site of ribosomes during protein biosynthesis. In Shewanella frigidimarina (strain NCIMB 400), this protein is Elongation factor Tu 2.